Here is a 739-residue protein sequence, read N- to C-terminus: NAD(P)H-quinone oxidoreductase subunit 5, chloroplastic (739 aa).

16 helical membrane passes run 9 to 29 (LIIP…LIFF), 40 to 60 (WAFP…NLSI), 89 to 109 (IDSL…LVLI), 125 to 145 (FAYM…SNLI), 147 to 167 (IHIF…FWFT), 185 to 205 (GDFG…SFEF), 224 to 244 (LFVI…SAQF), 258 to 278 (TPIS…FLVA), 283 to 303 (LFTV…ITIL), 327 to 347 (LGYI…FHLI), 354 to 374 (ALLF…VGYS), 396 to 416 (TAFF…CFWS), 425 to 445 (WLYS…TAFY), 546 to 566 (LFPL…GIPF), 605 to 625 (IFSV…YRPI), and 718 to 738 (ISSY…IFQV).

This sequence belongs to the complex I subunit 5 family. As to quaternary structure, NDH is composed of at least 16 different subunits, 5 of which are encoded in the nucleus.

The protein localises to the plastid. It localises to the chloroplast thylakoid membrane. The catalysed reaction is a plastoquinone + NADH + (n+1) H(+)(in) = a plastoquinol + NAD(+) + n H(+)(out). It carries out the reaction a plastoquinone + NADPH + (n+1) H(+)(in) = a plastoquinol + NADP(+) + n H(+)(out). In terms of biological role, NDH shuttles electrons from NAD(P)H:plastoquinone, via FMN and iron-sulfur (Fe-S) centers, to quinones in the photosynthetic chain and possibly in a chloroplast respiratory chain. The immediate electron acceptor for the enzyme in this species is believed to be plastoquinone. Couples the redox reaction to proton translocation, and thus conserves the redox energy in a proton gradient. The protein is NAD(P)H-quinone oxidoreductase subunit 5, chloroplastic (ndhF) of Buxus microphylla (Littleleaf boxwood).